Here is a 544-residue protein sequence, read N- to C-terminus: MAAKDVRFGNDARVKMLEGVNILADAVKVTLGPKGRNVVLDKSFGAPTITKDGVSVAREIELEDKFQNMGAQMVKEVASQANDAAGDGTTTATVLAQAIVNEGLKAVAAGMNPMDLKRGIDKAVIAAVEELKALSVPCADTKAIAQVGTISANSDSSVGNIIAEAMEKVGRDGVITVEEGQALQDELDVVEGMQFDRGYLSPYFINNQESGSVELDNPFILLVDKKISNIRELLPVLEGVAKASRPLLIVAEDVEGEALATLVVNNMRGIVKVAAVKAPGFGDRRKAMLQDIAILTGGVVISEEIGLELEKATLEDLGQAKRVSITKENSTIIDGAGDQAAIQGRVAQIRQQIEEATSDYDKEKLQERVAKLAGGVAVIKVGAATEVEMKEKKDRVEDALHATRAAVEEGVVAGGGVALIRAASKLSSLVGDNEEQNVGIRVALRAMEAPLRQIVKNAGDEESVVANNVRAGEGNYGYNAATGVYDDMIEMGILDPTKVTRSALQFAASVAGLMITTEAMITELPKKDAPAMPDMGMGGMGGMM.

ATP is bound by residues 30-33 (TLGP), lysine 51, 87-91 (DGTTT), glycine 415, 479-481 (NAA), and aspartate 495.

This sequence belongs to the chaperonin (HSP60) family. Forms a cylinder of 14 subunits composed of two heptameric rings stacked back-to-back. Interacts with the co-chaperonin GroES.

Its subcellular location is the cytoplasm. The enzyme catalyses ATP + H2O + a folded polypeptide = ADP + phosphate + an unfolded polypeptide.. Together with its co-chaperonin GroES, plays an essential role in assisting protein folding. The GroEL-GroES system forms a nano-cage that allows encapsulation of the non-native substrate proteins and provides a physical environment optimized to promote and accelerate protein folding. The sequence is that of Chaperonin GroEL 2 from Vibrio cholerae serotype O1 (strain ATCC 39541 / Classical Ogawa 395 / O395).